Reading from the N-terminus, the 157-residue chain is Trafficking protein particle complex subunit 6b (157 aa).

Belongs to the TRAPP small subunits family. BET3 subfamily. In terms of assembly, homodimer. Part of a TRAPP complex.

Its subcellular location is the golgi apparatus. The protein localises to the cis-Golgi network. It is found in the endoplasmic reticulum. Component of a transport protein particle (TRAPP) complex that may function in specific stages of inter-organelle traffic. Specifically involved in the early development of neural circuitry, likely by controlling the frequency and amplitude of intracellular calcium transients implicated in the regulation of neuron differentiation and survival. This chain is Trafficking protein particle complex subunit 6b, found in Danio rerio (Zebrafish).